A 347-amino-acid polypeptide reads, in one-letter code: Phosphoribosylformylglycinamidine cyclo-ligase (347 aa).

It belongs to the AIR synthase family.

Its subcellular location is the cytoplasm. It catalyses the reaction 2-formamido-N(1)-(5-O-phospho-beta-D-ribosyl)acetamidine + ATP = 5-amino-1-(5-phospho-beta-D-ribosyl)imidazole + ADP + phosphate + H(+). Its pathway is purine metabolism; IMP biosynthesis via de novo pathway; 5-amino-1-(5-phospho-D-ribosyl)imidazole from N(2)-formyl-N(1)-(5-phospho-D-ribosyl)glycinamide: step 2/2. The sequence is that of Phosphoribosylformylglycinamidine cyclo-ligase from Desulfatibacillum aliphaticivorans.